The sequence spans 715 residues: Solute carrier organic anion transporter family member 1C1 (715 aa).

Residues 1–43 are Cytoplasmic-facing; the sequence is MDTSSKENAHLFHKNSAQPAGGPSFTVGYPSTEEARPCCGKLK. A helical transmembrane segment spans residues 44-63; that stretch reads VFLGALSFVYFAKALAEGYL. Topologically, residues 64–82 are extracellular; the sequence is KSTVTQIERRFEIPSSLVG. A helical membrane pass occupies residues 83–103; the sequence is IIDGSFEIGNLLVITFVSYFG. Residues 104-109 are Cytoplasmic-facing; the sequence is AKLHRP. A helical membrane pass occupies residues 110 to 134; it reads KIIGAGCLVMGFGTMLIAVPQFFME. Residues 135-187 are Extracellular-facing; that stretch reads KYSYEKYERYSPSSNVTPSISPCYLESSSPSPSSILGKSQNKISHECVGDSSS. The chain crosses the membrane as a helical span at residues 188–216; the sequence is SMWVYVFLGNLLRGLGETPIQPLGIAYLD. Over 217-235 the chain is Cytoplasmic; that stretch reads DFASEDNAAFYIGCVQTVA. Residues 236–256 traverse the membrane as a helical segment; the sequence is IIGPIFGFLLGSLCAKLYVDI. Topologically, residues 257–274 are extracellular; the sequence is GFVNLDHITITPKDPQWV. A helical transmembrane segment spans residues 275–299; the sequence is GAWWLGYLIAGFLSLLAAVPFWCLP. The Cytoplasmic portion of the chain corresponds to 300–351; the sequence is KTLPRSQSRENSGSTSEKSKFIDDPIHYQMAPGDDKMKIMEMAKDFLPSLKT. Residues 352 to 373 traverse the membrane as a helical segment; the sequence is LFRNPVYILYLCASTVQFNSLF. Over 374 to 393 the chain is Extracellular; sequence GMVTYKPKYIEQQYGQSSSK. A helical membrane pass occupies residues 394–417; that stretch reads ANFVIGLINIPAVALGIFSGGIVM. The Cytoplasmic portion of the chain corresponds to 418–421; the sequence is KKFR. A helical membrane pass occupies residues 422–445; it reads LGICEATKLYLGSSVFGYLLFLSL. Over 446–557 the chain is Extracellular; sequence FALGCENSSV…NGCSQMFLYF (112 aa). N452 is a glycosylation site (N-linked (GlcNAc...) asparagine). In terms of domain architecture, Kazal-like spans 473–528; that stretch reads RALFSDCNSRCKCSDSKWEPMCGDNGITYVSACLAGCQSSSRSGKNIIFSNCTCVG. 3 disulfides stabilise this stretch: C479-C509, C485-C505, and C494-C526. N-linked (GlcNAc...) asparagine glycosylation is found at N523 and N536. The chain crosses the membrane as a helical span at residues 558–580; the sequence is LVISVITSYTLSLGGIPGYILLL. Topologically, residues 581–589 are cytoplasmic; that stretch reads RCIQPQLKS. The chain crosses the membrane as a helical span at residues 590 to 615; it reads FALGIYTLAVRVLAGIPAPVYFGVLI. Residues 616-649 lie on the Extracellular side of the membrane; that stretch reads DTSCLKWGFKKCGSRGSCRLYDSHAFRHIYLGLT. The chain crosses the membrane as a helical span at residues 650–667; it reads TLLGTVSVFLSMAVLFVL. The Cytoplasmic segment spans residues 668-715; sequence KKKYVSKHSSLITTREKIGMSSSIKKETCAARDRGLQPKYWPGKETRL.

Belongs to the organo anion transporter (TC 2.A.60) family. Widely expressed throughout the brain except in the cerebellum. Not detected in kidney, heart, lung, skeletal muscle, spleen, liver, nor testis. Highly expressed in cerebral microvessels throughout the brain and in the choroid plexus (at mRNA and protein level).

It is found in the cell membrane. It catalyses the reaction 3,3',5'-triiodo-L-thyronine(out) = 3,3',5'-triiodo-L-thyronine(in). The enzyme catalyses L-thyroxine(out) = L-thyroxine(in). The catalysed reaction is L-thyroxine sulfate(out) = L-thyroxine sulfate(in). It carries out the reaction 17beta-estradiol 17-O-(beta-D-glucuronate)(out) = 17beta-estradiol 17-O-(beta-D-glucuronate)(in). It catalyses the reaction 3,3',5-triiodo-L-thyronine(out) = 3,3',5-triiodo-L-thyronine(in). Its function is as follows. Mediates the Na(+)-independent high affinity transport of thyroid hormones at the plasma membrane of brain capillary endothelial cells. The transport activity of substrates L-thyroxine (T4) and 3,3',5'-triiodo-L-thyronine (reverse T3, rT3) is much greater than that of 3,3',5-triiodo-L-thyronine (T3). The prehormone, T4, is the major form in the circulating blood and is converted to the active form, T3, by the iodothyronine-deiodinase in peripheral organs. T3 plays an essential role in brain development via binding to specific nuclear receptors (thyroid hormone receptor). Also transports organic anions such as the conjugated steroid 17-beta-glucuronosyl estradiol (17beta-estradiol 17-O-(beta-D-glucuronate)). Transports T4 and estrone-3-sulfate in a pH-insensitive manner. May serve as a drug efflux system at the blood brain barrier. The protein is Solute carrier organic anion transporter family member 1C1 (Slco1c1) of Mus musculus (Mouse).